The sequence spans 307 residues: Acetyl-coenzyme A carboxylase carboxyl transferase subunit beta (307 aa).

The region spanning leucine 28–proline 297 is the CoA carboxyltransferase N-terminal domain. A disordered region spans residues arginine 286–alanine 307. The span at glycine 292–alanine 307 shows a compositional bias: pro residues.

The protein belongs to the AccD/PCCB family. In terms of assembly, acetyl-CoA carboxylase is a heterohexamer composed of biotin carboxyl carrier protein (AccB), biotin carboxylase (AccC) and two subunits each of ACCase subunit alpha (AccA) and ACCase subunit beta (AccD).

The protein localises to the cytoplasm. The enzyme catalyses N(6)-carboxybiotinyl-L-lysyl-[protein] + acetyl-CoA = N(6)-biotinyl-L-lysyl-[protein] + malonyl-CoA. It participates in lipid metabolism; malonyl-CoA biosynthesis; malonyl-CoA from acetyl-CoA: step 1/1. Its function is as follows. Component of the acetyl coenzyme A carboxylase (ACC) complex. Biotin carboxylase (BC) catalyzes the carboxylation of biotin on its carrier protein (BCCP) and then the CO(2) group is transferred by the transcarboxylase to acetyl-CoA to form malonyl-CoA. This is Acetyl-coenzyme A carboxylase carboxyl transferase subunit beta from Methylorubrum extorquens (strain CM4 / NCIMB 13688) (Methylobacterium extorquens).